The following is a 347-amino-acid chain: tRNA N6-adenosine threonylcarbamoyltransferase (347 aa).

Fe cation-binding residues include His113 and His117. Substrate is bound by residues 136 to 140 (IVSGG), Asp170, Gly183, Asp187, and Asn282. Asp310 contributes to the Fe cation binding site.

The protein belongs to the KAE1 / TsaD family. Requires Fe(2+) as cofactor.

The protein resides in the cytoplasm. The enzyme catalyses L-threonylcarbamoyladenylate + adenosine(37) in tRNA = N(6)-L-threonylcarbamoyladenosine(37) in tRNA + AMP + H(+). Required for the formation of a threonylcarbamoyl group on adenosine at position 37 (t(6)A37) in tRNAs that read codons beginning with adenine. Is involved in the transfer of the threonylcarbamoyl moiety of threonylcarbamoyl-AMP (TC-AMP) to the N6 group of A37, together with TsaE and TsaB. TsaD likely plays a direct catalytic role in this reaction. This Bifidobacterium longum (strain NCC 2705) protein is tRNA N6-adenosine threonylcarbamoyltransferase.